We begin with the raw amino-acid sequence, 213 residues long: Holliday junction resolvase RecU (213 aa).

4 residues coordinate Mg(2+): Thr-99, Asp-101, Glu-114, and Gln-133.

The protein belongs to the RecU family. Mg(2+) serves as cofactor.

It is found in the cytoplasm. The enzyme catalyses Endonucleolytic cleavage at a junction such as a reciprocal single-stranded crossover between two homologous DNA duplexes (Holliday junction).. In terms of biological role, endonuclease that resolves Holliday junction intermediates in genetic recombination. Cleaves mobile four-strand junctions by introducing symmetrical nicks in paired strands. Promotes annealing of linear ssDNA with homologous dsDNA. Required for DNA repair, homologous recombination and chromosome segregation. This chain is Holliday junction resolvase RecU, found in Lactococcus lactis subsp. cremoris (strain SK11).